We begin with the raw amino-acid sequence, 220 residues long: Glutathione S-transferase U23 (220 aa).

The region spanning 3–82 is the GST N-terminal domain; it reads EEIILLDYWA…YIDELWPDTN (80 aa). Glutathione contacts are provided by residues 13–14, 39–40, 53–54, and 66–67; these read SM, NK, KI, and ES. Residues 88–208 enclose the GST C-terminal domain; sequence DPYQRAQARF…LPDSDKVLKS (121 aa).

Belongs to the GST superfamily. Tau family.

The protein resides in the cytoplasm. It is found in the cytosol. The enzyme catalyses RX + glutathione = an S-substituted glutathione + a halide anion + H(+). May be involved in the conjugation of reduced glutathione to a wide number of exogenous and endogenous hydrophobic electrophiles and have a detoxification role against certain herbicides. The sequence is that of Glutathione S-transferase U23 (GSTU23) from Arabidopsis thaliana (Mouse-ear cress).